The primary structure comprises 215 residues: MGKVYDWFEERLEIQAIADDITSKYVPPHVNIFYCLGGITLTCFLVQVATGFAMTFYYRPTVTEAFSSVQYIMTEVNFGWLVRSVHRWSASMMVLMMILHVFRVYLTGGFKNPRELTWITGVILAVLTVSFGVTGYSLPWDQIGYWAVKIVTGVPEAIPVIGSPLVELLRGSVSVGQSTLTRFYSLHTFVLPLLTAVFMLMHFLMIRKQGISGPL.

Residues 32 to 52 form a helical membrane-spanning segment; sequence IFYCLGGITLTCFLVQVATGF. A heme c-binding site is contributed by cysteine 35. Histidine 86 and histidine 100 together coordinate heme b. Transmembrane regions (helical) follow at residues 90 to 110, 116 to 136, and 186 to 206; these read ASMMVLMMILHVFRVYLTGGF, LTWITGVILAVLTVSFGVTGY, and LHTFVLPLLTAVFMLMHFLMI. Residues histidine 187 and histidine 202 each contribute to the heme b site.

Belongs to the cytochrome b family. PetB subfamily. The 4 large subunits of the cytochrome b6-f complex are cytochrome b6, subunit IV (17 kDa polypeptide, PetD), cytochrome f and the Rieske protein, while the 4 small subunits are PetG, PetL, PetM and PetN. The complex functions as a dimer. Heme b serves as cofactor. Requires heme c as cofactor.

Its subcellular location is the plastid. The protein localises to the chloroplast thylakoid membrane. Component of the cytochrome b6-f complex, which mediates electron transfer between photosystem II (PSII) and photosystem I (PSI), cyclic electron flow around PSI, and state transitions. The protein is Cytochrome b6 of Psilotum nudum (Whisk fern).